Consider the following 83-residue polypeptide: MSGVVAVQVCTAWTSTPEGFMACRELAWQQAYLIPPEAAGYVDILVNGGFSPEAFGIGAAGVLGSFVTGLLIGWVASLLRKAK.

The chain crosses the membrane as a helical span at residues 55 to 75; it reads FGIGAAGVLGSFVTGLLIGWV.

Its subcellular location is the host membrane. Its function is as follows. May play a role in phage assembly. This is an uncharacterized protein from Pseudomonas phage Pf1 (Bacteriophage Pf1).